The sequence spans 265 residues: Zinc import ATP-binding protein ZnuC (265 aa).

The ABC transporter domain maps to I6–N221. Position 38-45 (G38–T45) interacts with ATP. Positions D245–G265 are disordered.

It belongs to the ABC transporter superfamily. Zinc importer (TC 3.A.1.15.5) family. As to quaternary structure, the complex is composed of two ATP-binding proteins (ZnuC), two transmembrane proteins (ZnuB) and a solute-binding protein (ZnuA).

It is found in the cell inner membrane. The catalysed reaction is Zn(2+)(out) + ATP(in) + H2O(in) = Zn(2+)(in) + ADP(in) + phosphate(in) + H(+)(in). In terms of biological role, part of the ABC transporter complex ZnuABC involved in zinc import. Responsible for energy coupling to the transport system. The polypeptide is Zinc import ATP-binding protein ZnuC (Pseudomonas savastanoi pv. phaseolicola (strain 1448A / Race 6) (Pseudomonas syringae pv. phaseolicola (strain 1448A / Race 6))).